Consider the following 170-residue polypeptide: Probable chemoreceptor glutamine deamidase CheD (170 aa).

Belongs to the CheD family.

It catalyses the reaction L-glutaminyl-[protein] + H2O = L-glutamyl-[protein] + NH4(+). Functionally, probably deamidates glutamine residues to glutamate on methyl-accepting chemotaxis receptors (MCPs), playing an important role in chemotaxis. In Maridesulfovibrio salexigens (strain ATCC 14822 / DSM 2638 / NCIMB 8403 / VKM B-1763) (Desulfovibrio salexigens), this protein is Probable chemoreceptor glutamine deamidase CheD.